Consider the following 551-residue polypeptide: Glucans biosynthesis protein D (551 aa).

Positions 1 to 32 form a signal peptide, tat-type signal; sequence MDRRRFIKGSMAMAAVCGTSGIASLFSQAAFA.

It belongs to the OpgD/OpgG family. Post-translationally, predicted to be exported by the Tat system. The position of the signal peptide cleavage has not been experimentally proven.

It localises to the periplasm. The protein operates within glycan metabolism; osmoregulated periplasmic glucan (OPG) biosynthesis. In terms of biological role, probably involved in the control of the structural glucose backbone of osmoregulated periplasmic glucans (OPGs). This Escherichia coli (strain K12 / MC4100 / BW2952) protein is Glucans biosynthesis protein D.